Here is a 1319-residue protein sequence, read N- to C-terminus: Son of sevenless homolog 1 (1319 aa).

Residues 200–390 (TYYDLVKAFM…LNVQSGMEKI (191 aa)) form the DH domain. The PH domain occupies 444-548 (FIMEGTLTRV…AALISLQYRS (105 aa)). The N-terminal Ras-GEF domain maps to 597 to 741 (GIPIIKAGTV…SITKIIQRKK (145 aa)). The region spanning 780–1019 (HPIEIARQLT…FNKSLEIEPR (240 aa)) is the Ras-GEF domain. The interval 1019 to 1101 (RHPKPLPRFP…ASGTSSNTDV (83 aa)) is disordered. Phosphoserine is present on residues Ser-1078 and Ser-1082. 2 positions are modified to phosphoserine; by RPS6KA3: Ser-1120 and Ser-1147. The disordered stretch occupies residues 1121–1319 (VSSISLSKGT…PPLLENAHSS (199 aa)). Ser-1164, Ser-1196, and Ser-1215 each carry phosphoserine. Residues 1194–1203 (PESPPLLPPR) are compositionally biased toward pro residues. Residues 1238–1250 (SPSPFTPPPPQTP) show a composition bias toward pro residues. A Phosphoserine modification is found at Ser-1261. Basic and acidic residues predominate over residues 1296–1309 (YKREHTHPSMHRDG).

As to quaternary structure, interacts (via C-terminus) with GRB2 (via SH3 domain). Forms a complex with phosphorylated MUC1 and GRB2 (via its SH3 domains). Interacts with phosphorylated LAT2. Interacts with NCK1 and NCK2. Part of a complex consisting of ABI1, EPS8 and SOS1. Interacts (Ser-1120 and Ser-1147 phosphorylated form) with YWHAB and YWHAE. Phosphorylation at Ser-1120 and Ser-1147 by RPS6KA3 create YWHAB and YWHAE binding sites and which contribute to the negative regulation of EGF-induced MAPK1/3 phosphorylation. Expressed in most embryonic and adult tissues.

Its function is as follows. Promotes the exchange of Ras-bound GDP by GTP. Probably by promoting Ras activation, regulates phosphorylation of MAP kinase MAPK3 in response to EGF. Catalytic component of a trimeric complex that participates in transduction of signals from Ras to Rac by promoting the Rac-specific guanine nucleotide exchange factor (GEF) activity. In Mus musculus (Mouse), this protein is Son of sevenless homolog 1 (Sos1).